The following is a 524-amino-acid chain: MSAILKQRVRYAPYLKKLRTGEQCIDLFKHGQYLGWSGFTGVGAPKVIPTTLVDHVEKNNLQGKLGFHLFVGASAGPEESRWAENNMILTRAPHQVGKPIAAAINDGRTQFFDKHLSMFPQDLTYGFYTKDKPNGSNLDYTIIEATAITEDGSIVPGPAVGASPEMISVSDKIIIEVNTKTPSFEGIHDIDMPVNPPFRQPYPHTSADFKIGKTAIPVDPEKVVAIVESTSGDKVPPNTPSDEQSRGIANHLIEFLEHEVKQGRLPANLHPLQSGIGNIANAVVEGLASSNFKNLTVWTEVLQDSFLDFFESGSLDYATATSIRLTNDGFKKFYDNWDTYSKKLCLRSQVVSNSPEIIRRLGVIAMNTPVEVDIYGHANSTNVMGSRMLNGLGGSADFLRNAKLSIMHTPSARPSKVDPTGLSCIVPMASHVDQTEHDLDVVVTEQGLADLRGLAPKARAKVIIDKCSHPDYKPQLQEYYDRSVFYATKKKTLHEPHILRDVFKMHLNFQENGTMKLDSWDQKF.

Position 275 to 279 (275 to 279 (GIGNI)) interacts with CoA. Catalysis depends on E300, which acts as the 5-glutamyl coenzyme A thioester intermediate. CoA is bound by residues N390 and G394.

This sequence belongs to the acetyl-CoA hydrolase/transferase family.

It is found in the cytoplasm. It carries out the reaction acetyl-CoA + H2O = acetate + CoA + H(+). Its function is as follows. Presumably involved in regulating the intracellular acetyl-CoA pool for fatty acid and cholesterol synthesis and fatty acid oxidation. The sequence is that of Acetyl-CoA hydrolase (ACH1) from Candida albicans (strain SC5314 / ATCC MYA-2876) (Yeast).